The primary structure comprises 160 residues: MRIGLFAVGRLKSGPEKDLVARYLDRFAKAGSAVGLEFTRVAEVGESRASNAETRKREEAAMLLKSLAEGSVLILLDERGKALDSEAFAKLLGGYRDQGKRELTIAIGGADGLDPSLYDRADATLCLGKMTWPHQLVRTLIAEQLYRAVTILSGHPYHRV.

S-adenosyl-L-methionine contacts are provided by residues Leu76, Gly108, and 127-132 (LGKMTW).

This sequence belongs to the RNA methyltransferase RlmH family. Homodimer.

It localises to the cytoplasm. It catalyses the reaction pseudouridine(1915) in 23S rRNA + S-adenosyl-L-methionine = N(3)-methylpseudouridine(1915) in 23S rRNA + S-adenosyl-L-homocysteine + H(+). Functionally, specifically methylates the pseudouridine at position 1915 (m3Psi1915) in 23S rRNA. The sequence is that of Ribosomal RNA large subunit methyltransferase H from Rhizobium etli (strain ATCC 51251 / DSM 11541 / JCM 21823 / NBRC 15573 / CFN 42).